The sequence spans 411 residues: Serine hydroxymethyltransferase (411 aa).

120–122 provides a ligand contact to (6S)-5,6,7,8-tetrahydrofolate; that stretch reads GHL. Lys225 is subject to N6-(pyridoxal phosphate)lysine. 350–352 lines the (6S)-5,6,7,8-tetrahydrofolate pocket; it reads SPF.

Belongs to the SHMT family. In terms of assembly, homodimer. Pyridoxal 5'-phosphate is required as a cofactor.

It localises to the cytoplasm. It carries out the reaction (6R)-5,10-methylene-5,6,7,8-tetrahydrofolate + glycine + H2O = (6S)-5,6,7,8-tetrahydrofolate + L-serine. Its pathway is one-carbon metabolism; tetrahydrofolate interconversion. It participates in amino-acid biosynthesis; glycine biosynthesis; glycine from L-serine: step 1/1. Its function is as follows. Catalyzes the reversible interconversion of serine and glycine with tetrahydrofolate (THF) serving as the one-carbon carrier. This reaction serves as the major source of one-carbon groups required for the biosynthesis of purines, thymidylate, methionine, and other important biomolecules. Also exhibits THF-independent aldolase activity toward beta-hydroxyamino acids, producing glycine and aldehydes, via a retro-aldol mechanism. The sequence is that of Serine hydroxymethyltransferase from Lactobacillus acidophilus (strain ATCC 700396 / NCK56 / N2 / NCFM).